Reading from the N-terminus, the 288-residue chain is Transmembrane and coiled-coil domain-containing protein 5A (288 aa).

A coiled-coil region spans residues 10 to 192 (KRNIISLNMD…ALFLEREVSK (183 aa)). Residues 224–244 (IFCCLFFITLFFIRLLSYMFF) form a helical membrane-spanning segment.

This sequence belongs to the TMCO5 family.

The protein localises to the endoplasmic reticulum membrane. It is found in the nucleus membrane. In Homo sapiens (Human), this protein is Transmembrane and coiled-coil domain-containing protein 5A (TMCO5A).